A 376-amino-acid chain; its full sequence is Protein-glutamate methylesterase/protein-glutamine glutaminase 1 (376 aa).

The 118-residue stretch at 4–121 (KVLVVDDSSF…ARNRDEAVSL (118 aa)) folds into the Response regulatory domain. Position 55 is a 4-aspartylphosphate (Asp-55). The disordered stretch occupies residues 138-174 (RPVASSTPVQERPQSTLNRPTTGLRREAPAQAPVSRA). Residues 141-158 (ASSTPVQERPQSTLNRPT) are compositionally biased toward polar residues. Residues 183-376 (SGKKYQLTAI…ERMLVEVGLA (194 aa)) enclose the CheB-type methylesterase domain. Residues Ser-195, His-222, and Asp-318 contribute to the active site.

Belongs to the CheB family. Post-translationally, phosphorylated by CheA. Phosphorylation of the N-terminal regulatory domain activates the methylesterase activity.

The protein resides in the cytoplasm. It catalyses the reaction [protein]-L-glutamate 5-O-methyl ester + H2O = L-glutamyl-[protein] + methanol + H(+). The enzyme catalyses L-glutaminyl-[protein] + H2O = L-glutamyl-[protein] + NH4(+). In terms of biological role, involved in chemotaxis. Part of a chemotaxis signal transduction system that modulates chemotaxis in response to various stimuli. Catalyzes the demethylation of specific methylglutamate residues introduced into the chemoreceptors (methyl-accepting chemotaxis proteins or MCP) by CheR. Also mediates the irreversible deamidation of specific glutamine residues to glutamic acid. The protein is Protein-glutamate methylesterase/protein-glutamine glutaminase 1 of Vibrio vulnificus (strain CMCP6).